The sequence spans 331 residues: Adenosine deaminase (331 aa).

The Zn(2+) site is built by His-12 and His-14. Residues His-14, Asp-16, and Gly-170 each contribute to the substrate site. His-197 serves as a coordination point for Zn(2+). The active-site Proton donor is Glu-200. Asp-278 is a Zn(2+) binding site. Asp-279 is a substrate binding site.

It belongs to the metallo-dependent hydrolases superfamily. Adenosine and AMP deaminases family. Adenosine deaminase subfamily. It depends on Zn(2+) as a cofactor.

The catalysed reaction is adenosine + H2O + H(+) = inosine + NH4(+). The enzyme catalyses 2'-deoxyadenosine + H2O + H(+) = 2'-deoxyinosine + NH4(+). In terms of biological role, catalyzes the hydrolytic deamination of adenosine and 2-deoxyadenosine. This chain is Adenosine deaminase, found in Shewanella sp. (strain W3-18-1).